The chain runs to 214 residues: ATP phosphoribosyltransferase (214 aa).

This sequence belongs to the ATP phosphoribosyltransferase family. Short subfamily. In terms of assembly, heteromultimer composed of HisG and HisZ subunits.

The protein localises to the cytoplasm. The catalysed reaction is 1-(5-phospho-beta-D-ribosyl)-ATP + diphosphate = 5-phospho-alpha-D-ribose 1-diphosphate + ATP. It participates in amino-acid biosynthesis; L-histidine biosynthesis; L-histidine from 5-phospho-alpha-D-ribose 1-diphosphate: step 1/9. In terms of biological role, catalyzes the condensation of ATP and 5-phosphoribose 1-diphosphate to form N'-(5'-phosphoribosyl)-ATP (PR-ATP). Has a crucial role in the pathway because the rate of histidine biosynthesis seems to be controlled primarily by regulation of HisG enzymatic activity. The protein is ATP phosphoribosyltransferase (hisG) of Aquifex aeolicus (strain VF5).